Here is a 283-residue protein sequence, read N- to C-terminus: 4-diphosphocytidyl-2-C-methyl-D-erythritol kinase (283 aa).

K10 is a catalytic residue. 95-105 (PVAAGLGGGSS) contributes to the ATP binding site. D137 is a catalytic residue.

Belongs to the GHMP kinase family. IspE subfamily.

It carries out the reaction 4-CDP-2-C-methyl-D-erythritol + ATP = 4-CDP-2-C-methyl-D-erythritol 2-phosphate + ADP + H(+). The protein operates within isoprenoid biosynthesis; isopentenyl diphosphate biosynthesis via DXP pathway; isopentenyl diphosphate from 1-deoxy-D-xylulose 5-phosphate: step 3/6. In terms of biological role, catalyzes the phosphorylation of the position 2 hydroxy group of 4-diphosphocytidyl-2C-methyl-D-erythritol. The chain is 4-diphosphocytidyl-2-C-methyl-D-erythritol kinase from Limosilactobacillus fermentum (strain NBRC 3956 / LMG 18251) (Lactobacillus fermentum).